The chain runs to 498 residues: ATP synthase subunit beta, chloroplastic (498 aa).

Position 6 is a phosphothreonine (Thr-6). Ser-13 is subject to Phosphoserine. 172–179 provides a ligand contact to ATP; sequence GGAGVGKT.

This sequence belongs to the ATPase alpha/beta chains family. As to quaternary structure, F-type ATPases have 2 components, CF(1) - the catalytic core - and CF(0) - the membrane proton channel. CF(1) has five subunits: alpha(3), beta(3), gamma(1), delta(1), epsilon(1). CF(0) has four main subunits: a(1), b(1), b'(1) and c(9-12).

The protein resides in the plastid. It is found in the chloroplast thylakoid membrane. The enzyme catalyses ATP + H2O + 4 H(+)(in) = ADP + phosphate + 5 H(+)(out). Functionally, produces ATP from ADP in the presence of a proton gradient across the membrane. The catalytic sites are hosted primarily by the beta subunits. This chain is ATP synthase subunit beta, chloroplastic, found in Brassica napus (Rape).